Here is a 513-residue protein sequence, read N- to C-terminus: GMP synthase [glutamine-hydrolyzing] (513 aa).

The Glutamine amidotransferase type-1 domain maps to 9–198; sequence LILVLDFGSQ…IREICKCTGE (190 aa). C86 (nucleophile) is an active-site residue. Residues H172 and E174 contribute to the active site. In terms of domain architecture, GMPS ATP-PPase spans 199–388; sequence WTMENFIEIE…LGIPEHLVWR (190 aa). Residue 226–232 coordinates ATP; that stretch reads SGGVDSS.

As to quaternary structure, homodimer.

The enzyme catalyses XMP + L-glutamine + ATP + H2O = GMP + L-glutamate + AMP + diphosphate + 2 H(+). Its pathway is purine metabolism; GMP biosynthesis; GMP from XMP (L-Gln route): step 1/1. Its function is as follows. Catalyzes the synthesis of GMP from XMP. In Macrococcus caseolyticus (strain JCSC5402) (Macrococcoides caseolyticum), this protein is GMP synthase [glutamine-hydrolyzing].